Reading from the N-terminus, the 1163-residue chain is Voltage-gated inwardly rectifying potassium channel KCNH2 (1163 aa).

Residues 1–405 (MPVRRGHVAP…RIHRWTILHY (405 aa)) lie on the Cytoplasmic side of the membrane. The region spanning 17 to 88 (TIIRKFEGQS…AAQIAQALLG (72 aa)) is the PAS domain. The PAC domain maps to 92–144 (RKVEIAFYRKDGSCFLCLVDVVPVKNEDGAVIMFILNFEVVMEKDMVGSPAHD). Residues 235–286 (VGPASASPVASIPGPHPSPRAQSLNPDASGSSCSLARTRSRESCASVRRASS) form a disordered region. Phosphoserine occurs at positions 239 and 245. The span at 254-271 (RAQSLNPDASGSSCSLAR) shows a compositional bias: polar residues. Residues Ser-285, Ser-286, Ser-322, and Ser-353 each carry the phosphoserine modification. A helical membrane pass occupies residues 406 to 426 (SPFKAVWDWLILLLVIYTAVF). Topologically, residues 427–452 (TPYSAAFLLKETEDGSQAPDCGYACQ) are extracellular. A helical membrane pass occupies residues 453–473 (PLAVVDLLVDIMFIVDILINF). The Cytoplasmic segment spans residues 474–497 (RTTYVNANEEVVSHPGRIAVHYFK). The helical transmembrane segment at 498-518 (GWFLIDMVAAIPFDLLIFGSG) threads the bilayer. Residues 519–522 (SEEL) are Extracellular-facing. A helical; Voltage-sensor transmembrane segment spans residues 523-543 (IGLLKTARLLRLVRVARKLDR). At 544–549 (YSEYGA) the chain is on the cytoplasmic side. The helical transmembrane segment at 550–570 (AVLFLLMCTFALIAHWLACIW) threads the bilayer. The Extracellular segment spans residues 571–613 (YAIGNMEQPHMDSHIGWLHNLGDQIGKPYNSSGLGGPSIKDKY). N-linked (GlcNAc...) asparagine glycosylation occurs at Asn-600. The pore-forming intramembrane region spans 614-634 (VTALYFTFSSLTSVGFGNVSP). Residues 626–631 (SVGFGN) carry the Selectivity filter motif. Over 635-640 (NTNSEK) the chain is Extracellular. The chain crosses the membrane as a helical span at residues 641–661 (IFSICVMLIGSLMYASIFGNV). At 662–1163 (SAIIQRLYSG…LHRHGSDPGS (502 aa)) the chain is on the cytoplasmic side. The interval 744–844 (PFRGATKGCL…IHRDDLLEVL (101 aa)) is cNMP-binding domain. Phosphoserine occurs at positions 873 and 876. Disordered regions lie at residues 873–992 (SPSS…NPLS), 1015–1043 (ELPRCPAPAPSLLNIPLSSPGRRSRGDVE), and 1126–1163 (AGAPELPQDGPTRRLSLPGQLGALTSQPLHRHGSDPGS). The segment covering 885–894 (RQRKRKLSFR) has biased composition (basic residues). Residues 932–943 (GESPSSGPSSPE) are compositionally biased toward low complexity. Arg-1018 is subject to Omega-N-methylarginine. Residues 1039–1066 (RGDVESRLDALQRQLNRLETRLSADMAT) are a coiled coil. At Ser-1141 the chain carries Phosphoserine.

The protein belongs to the potassium channel family. H (Eag) (TC 1.A.1.20) subfamily. Kv11.1/KCNH2 sub-subfamily. As to quaternary structure, the potassium channel is probably composed of a homo- or heterotetrameric complex of pore-forming alpha subunits that can associate with modulating beta subunits. Interacts with DNAJB12 and DNAJB14; chaperones DNAJB12 and DNAJB14 promote tetramerization. Heteromultimer with KCNH6/ERG2 and KCNH7/ERG3. Interacts with ALG10B. Forms a stable complex with KCNE1 or KCNE2, and that this heteromultimerization regulates Inward rectifier potassium channel activity. Interacts with CANX. The core-glycosylated, but not the fully glycosylated form interacts with RNF207. Interacts with NDFIP1 and NDFIP2; this interaction decreases the cell membrane expression by targeting KCNH2, through interaction with NEDD4L, for the degradation through the multivesicular bodies (MVBs)-lysosomal pathway. Post-translationally, phosphorylated on serine and threonine residues. Phosphorylation by PKA inhibits ion conduction. Highly expressed in brain and testis, slightly less so in heart, adrenal, retina and thymus. Detected at lower levels in lung, soleus, tibialis, and at very low levels in cornea and lens. A shorter transcript is detected in skeletal muscle. Found in pituitary.

The protein resides in the cell membrane. The catalysed reaction is K(+)(in) = K(+)(out). Pore-forming (alpha) subunit of voltage-gated inwardly rectifying potassium channel. Characterized by unusual gating kinetics by producing relatively small outward currents during membrane depolarization and large inward currents during subsequent repolarization which reflect a rapid inactivation during depolarization and quick recovery from inactivation but slow deactivation (closing) during repolarization. Channel properties are modulated by cAMP and subunit assembly. Forms a stable complex with KCNE1 or KCNE2, and that this heteromultimerization regulates inward rectifier potassium channel activity. This is Voltage-gated inwardly rectifying potassium channel KCNH2 from Rattus norvegicus (Rat).